The primary structure comprises 565 residues: Periplasmic trehalase (565 aa).

An N-terminal signal peptide occupies residues 1–30; the sequence is MKSPAPSRPQKMALIPACIFLYFAALSVQA. Substrate-binding positions include Arg152, 159 to 160, Asn196, 205 to 207, 277 to 279, and Gly310; these read WD, RSQ, and RPE. Active-site proton donor/acceptor residues include Asp312 and Glu496. Glu511 contributes to the substrate binding site. The disordered stretch occupies residues 540–565; it reads DNVPATHPTVKSATTQPSTKEAQPTP. Over residues 548–565 the composition is skewed to polar residues; the sequence is TVKSATTQPSTKEAQPTP.

Belongs to the glycosyl hydrolase 37 family. Monomer.

The protein resides in the periplasm. The catalysed reaction is alpha,alpha-trehalose + H2O = alpha-D-glucose + beta-D-glucose. Its function is as follows. Provides the cells with the ability to utilize trehalose at high osmolarity by splitting it into glucose molecules that can subsequently be taken up by the phosphotransferase-mediated uptake system. In Shigella flexneri serotype 5b (strain 8401), this protein is Periplasmic trehalase.